We begin with the raw amino-acid sequence, 159 residues long: Protein-export protein SecB (159 aa).

The protein belongs to the SecB family. Homotetramer, a dimer of dimers. One homotetramer interacts with 1 SecA dimer.

It is found in the cytoplasm. Functionally, one of the proteins required for the normal export of preproteins out of the cell cytoplasm. It is a molecular chaperone that binds to a subset of precursor proteins, maintaining them in a translocation-competent state. It also specifically binds to its receptor SecA. In Nitrosospira multiformis (strain ATCC 25196 / NCIMB 11849 / C 71), this protein is Protein-export protein SecB.